The following is a 309-amino-acid chain: MSSFANRDVISVRDFTRKELEELLSHAEEMERVYERGGDDRLSGKILATLFFSPSTRTRLSFESAMHRLGGDVISLGGKEAASTAKGENLADTVRTVEHYCDVIVLRHPKEGAARLAAELTDVPVINAGDGANQHPTQTFLDLYTIMKEKGRIGGLRIGLLGDLKYGRTVHSLAYALALFGAKIHLISPEELRMPSHILEELEQIGAEVEEHRDLEEILPDLDVLYVTRIQREMFPDPEEFERVKGSYKVTRELIEEHARSDLVILHPLPRVDEIEPDVDELPQARYFDQVRNGVIVRMALLDLILGGG.

Carbamoyl phosphate is bound by residues Arg-57 and Thr-58. Lys-86 provides a ligand contact to L-aspartate. Residues Arg-107, His-135, and Gln-138 each contribute to the carbamoyl phosphate site. L-aspartate contacts are provided by Arg-168 and Arg-229. Leu-269 and Pro-270 together coordinate carbamoyl phosphate.

Belongs to the aspartate/ornithine carbamoyltransferase superfamily. ATCase family. In terms of assembly, heterooligomer of catalytic and regulatory chains.

The enzyme catalyses carbamoyl phosphate + L-aspartate = N-carbamoyl-L-aspartate + phosphate + H(+). Its pathway is pyrimidine metabolism; UMP biosynthesis via de novo pathway; (S)-dihydroorotate from bicarbonate: step 2/3. In terms of biological role, catalyzes the condensation of carbamoyl phosphate and aspartate to form carbamoyl aspartate and inorganic phosphate, the committed step in the de novo pyrimidine nucleotide biosynthesis pathway. The sequence is that of Aspartate carbamoyltransferase catalytic subunit from Methanopyrus kandleri (strain AV19 / DSM 6324 / JCM 9639 / NBRC 100938).